Reading from the N-terminus, the 339-residue chain is UDP-N-acetylglucosamine--N-acetylmuramyl-(pentapeptide) pyrophosphoryl-undecaprenol N-acetylglucosamine transferase (339 aa).

UDP-N-acetyl-alpha-D-glucosamine is bound by residues Thr-11 to Gly-13, Asn-127, Arg-170, Ser-188, Ile-235, and Gln-280.

Belongs to the glycosyltransferase 28 family. MurG subfamily.

The protein resides in the cell inner membrane. The enzyme catalyses di-trans,octa-cis-undecaprenyl diphospho-N-acetyl-alpha-D-muramoyl-L-alanyl-D-glutamyl-meso-2,6-diaminopimeloyl-D-alanyl-D-alanine + UDP-N-acetyl-alpha-D-glucosamine = di-trans,octa-cis-undecaprenyl diphospho-[N-acetyl-alpha-D-glucosaminyl-(1-&gt;4)]-N-acetyl-alpha-D-muramoyl-L-alanyl-D-glutamyl-meso-2,6-diaminopimeloyl-D-alanyl-D-alanine + UDP + H(+). It participates in cell wall biogenesis; peptidoglycan biosynthesis. Cell wall formation. Catalyzes the transfer of a GlcNAc subunit on undecaprenyl-pyrophosphoryl-MurNAc-pentapeptide (lipid intermediate I) to form undecaprenyl-pyrophosphoryl-MurNAc-(pentapeptide)GlcNAc (lipid intermediate II). This Thermotoga maritima (strain ATCC 43589 / DSM 3109 / JCM 10099 / NBRC 100826 / MSB8) protein is UDP-N-acetylglucosamine--N-acetylmuramyl-(pentapeptide) pyrophosphoryl-undecaprenol N-acetylglucosamine transferase.